A 397-amino-acid chain; its full sequence is CCA-adding enzyme (397 aa).

Residues Gly-32 and Arg-35 each contribute to the ATP site. CTP-binding residues include Gly-32 and Arg-35. Mg(2+)-binding residues include Asp-45 and Asp-47. ATP contacts are provided by Arg-116, Asp-159, Arg-162, Arg-165, and Arg-168. CTP is bound by residues Arg-116, Asp-159, Arg-162, Arg-165, and Arg-168.

It belongs to the tRNA nucleotidyltransferase/poly(A) polymerase family. Bacterial CCA-adding enzyme type 3 subfamily. In terms of assembly, homodimer. The cofactor is Mg(2+).

The catalysed reaction is a tRNA precursor + 2 CTP + ATP = a tRNA with a 3' CCA end + 3 diphosphate. The enzyme catalyses a tRNA with a 3' CCA end + 2 CTP + ATP = a tRNA with a 3' CCACCA end + 3 diphosphate. Functionally, catalyzes the addition and repair of the essential 3'-terminal CCA sequence in tRNAs without using a nucleic acid template. Adds these three nucleotides in the order of C, C, and A to the tRNA nucleotide-73, using CTP and ATP as substrates and producing inorganic pyrophosphate. tRNA 3'-terminal CCA addition is required both for tRNA processing and repair. Also involved in tRNA surveillance by mediating tandem CCA addition to generate a CCACCA at the 3' terminus of unstable tRNAs. While stable tRNAs receive only 3'-terminal CCA, unstable tRNAs are marked with CCACCA and rapidly degraded. The protein is CCA-adding enzyme of Levilactobacillus brevis (strain ATCC 367 / BCRC 12310 / CIP 105137 / JCM 1170 / LMG 11437 / NCIMB 947 / NCTC 947) (Lactobacillus brevis).